Reading from the N-terminus, the 88-residue chain is Three-finger toxin 3FTx-2 (88 aa).

The N-terminal stretch at 1-21 is a signal peptide; sequence MKTLLLTLVVVTIVCLDLGNT. Intrachain disulfides connect Cys27–Cys48, Cys41–Cys66, Cys70–Cys81, and Cys82–Cys87.

Belongs to the three-finger toxin family. Ancestral subfamily. Orphan group II sub-subfamily. In terms of tissue distribution, expressed by the venom gland.

The protein localises to the secreted. In terms of biological role, binds with low affinity to muscular (alpha-1-beta-1-delta-epsilon/CHRNA1-CHRNB1-CHRND-CHRNE) and very low affinity to neuronal (alpha-7/CHRNA7) nicotinic acetylcholine receptor (nAChR). The protein is Three-finger toxin 3FTx-2 of Micrurus corallinus (Brazilian coral snake).